The primary structure comprises 380 residues: Nucleoporin Nup43 (380 aa).

Methionine 1 is subject to N-acetylmethionine. WD repeat units follow at residues 8–57 (FVSQ…NLDS), 72–110 (RHHG…QTLS), 119–166 (HYHT…AVRT), 170–208 (ADSS…SEPC), 215–255 (GDRV…MPVS), and 259–299 (AHEA…PEKS).

In terms of assembly, component of the Nup107-160 subcomplex of the nuclear pore complex (NPC). The Nup107-160 subcomplex includes NUP160, NUP133, NUP107, NUP98, NUP85, NUP43, NUP37, SEH1 and SEC13.

The protein localises to the chromosome. It is found in the centromere. It localises to the kinetochore. Its subcellular location is the nucleus. The protein resides in the nuclear pore complex. Component of the Nup107-160 subcomplex of the nuclear pore complex (NPC). The Nup107-160 subcomplex is required for the assembly of a functional NPC. The Nup107-160 subcomplex is also required for normal kinetochore microtubule attachment, mitotic progression and chromosome segregation. The protein is Nucleoporin Nup43 (Nup43) of Mus musculus (Mouse).